The chain runs to 61 residues: Small ribosomal subunit protein uS14 (61 aa).

Residues C24, C27, C40, and C43 each coordinate Zn(2+).

This sequence belongs to the universal ribosomal protein uS14 family. Zinc-binding uS14 subfamily. As to quaternary structure, part of the 30S ribosomal subunit. Contacts proteins S3 and S10. Zn(2+) serves as cofactor.

Binds 16S rRNA, required for the assembly of 30S particles and may also be responsible for determining the conformation of the 16S rRNA at the A site. The sequence is that of Small ribosomal subunit protein uS14 from Anaeromyxobacter dehalogenans (strain 2CP-1 / ATCC BAA-258).